Reading from the N-terminus, the 514-residue chain is Na(+)/H(+) antiporter NhaB (514 aa).

Helical transmembrane passes span 21–41 (LAIV…SPFI), 43–63 (GWLL…CYPL), 88–108 (IMAN…IFFM), 143–163 (FLDA…FYGV), 203–223 (LMMH…VGEP), 239–259 (FFLR…LTCF), 304–324 (ALIA…VGLI), 349–369 (QESL…AVII), 390–410 (LALF…VFVA), 448–468 (ATPN…SPLI), and 484–504 (IVLS…ATIW).

It belongs to the NhaB Na(+)/H(+) (TC 2.A.34) antiporter family.

Its subcellular location is the cell inner membrane. It carries out the reaction 2 Na(+)(in) + 3 H(+)(out) = 2 Na(+)(out) + 3 H(+)(in). Functionally, na(+)/H(+) antiporter that extrudes sodium in exchange for external protons. In Haemophilus influenzae (strain ATCC 51907 / DSM 11121 / KW20 / Rd), this protein is Na(+)/H(+) antiporter NhaB.